Consider the following 472-residue polypeptide: Ammonium transporter Rh type C (472 aa).

Over 1-9 (MAWNTNLRW) the chain is Cytoplasmic. Residues 10–30 (RLPLTCLLLEVVMVILFGVFV) traverse the membrane as a helical segment. Residues 31–51 (RYDFDADAHWWSWRTEFYYRY) are Extracellular-facing. The chain crosses the membrane as a helical span at residues 52–72 (PSFQDVHVMVFVGFGFLMTFL). The Cytoplasmic segment spans residues 73 to 76 (QRYG). The helical transmembrane segment at 77 to 97 (FSAVGFNFLLAAFGIQWALLM) threads the bilayer. Topologically, residues 98-114 (QGWFHFLQGRYIVVGVE) are extracellular. A helical membrane pass occupies residues 115 to 135 (NLINADFCVASVCVAFGAVLG). The Cytoplasmic segment spans residues 136 to 139 (KVSP). The chain crosses the membrane as a helical span at residues 140 to 160 (IQLLIMTFFQVTLFAVNEFIL). Over 161-168 (LNLLKVKD) the chain is Extracellular. A helical membrane pass occupies residues 169 to 191 (AGGSMTIHTFGAYFGLTVTRILY). The Cytoplasmic segment spans residues 192–209 (RRNLEQSKERQNSVYQSD). The helical transmembrane segment at 210–230 (LFAMIGTLFLWMYWPSFNSAI) threads the bilayer. Topologically, residues 231 to 241 (SYHGDSQHRAA) are extracellular. Residues 242 to 262 (INTYCSLAACVLTSVAISSAL) traverse the membrane as a helical segment. Over 263–294 (HKKGKLDMVHIQNATPAGGVAVGTAAEMMLMP) the chain is Cytoplasmic. The chain crosses the membrane as a helical span at residues 295 to 315 (YGALIVGFVCGIISTLGFVYL). At 316–336 (TPFLESRLHIQDTCGINNLHG) the chain is on the extracellular side. Residues 337-357 (IPGIIGGIVGAVTAASASLEV) form a helical membrane-spanning segment. The Cytoplasmic segment spans residues 358–388 (YGKEGLVHSFDFQGFKRDWTARTQGKFQIYG). The chain crosses the membrane as a helical span at residues 389–409 (LLVTLAMALMGGIIVGVGLIL). Over 410–450 (RLPFWGQPSDENCFEDAVYWEMPEGNSTVYIPEDPTFKPSG) the chain is Extracellular. An N-linked (GlcNAc...) asparagine glycan is attached at Asn435. A helical transmembrane segment spans residues 451–471 (PSVPSVPMVSPLPMASSVPLV). Residue Pro472 is a topological domain, cytoplasmic.

This sequence belongs to the ammonium transporter (TC 2.A.49) family. Rh subfamily. Homotrimer. N-glycosylated.

The protein localises to the cell membrane. It is found in the apical cell membrane. It catalyses the reaction NH4(+)(in) = NH4(+)(out). The enzyme catalyses methylamine(out) = methylamine(in). It carries out the reaction CO2(out) = CO2(in). Its function is as follows. Ammonium transporter involved in the maintenance of acid-base homeostasis. Transports ammonium and its related derivative methylammonium across the plasma membrane of epithelial cells likely contributing to renal transepithelial ammonia transport and ammonia metabolism. Postulated to primarily mediate an electroneutral bidirectional transport of NH3 ammonia species according to a mechanism that implies interaction of an NH4(+) ion with acidic residues of the pore entry followed by dissociation of NH4(+) into NH3 and H(+). As a result NH3 transits through the central pore and is protonated on the extracellular side reforming NH4(+). May act as a CO2 channel providing for renal acid secretion. In Pongo abelii (Sumatran orangutan), this protein is Ammonium transporter Rh type C (RHCG).